The sequence spans 263 residues: Tryptophan 2,3-dioxygenase (263 aa).

Substrate is bound by residues 32-36 (FIIVH), Y94, and R98. Residue H221 coordinates heme. T235 is a binding site for substrate.

Belongs to the tryptophan 2,3-dioxygenase family. Homotetramer. The cofactor is heme.

It catalyses the reaction L-tryptophan + O2 = N-formyl-L-kynurenine. It participates in amino-acid degradation; L-tryptophan degradation via kynurenine pathway; L-kynurenine from L-tryptophan: step 1/2. Its function is as follows. Heme-dependent dioxygenase that catalyzes the oxidative cleavage of the L-tryptophan (L-Trp) pyrrole ring and converts L-tryptophan to N-formyl-L-kynurenine. Catalyzes the oxidative cleavage of the indole moiety. This Erythrobacter litoralis (strain HTCC2594) protein is Tryptophan 2,3-dioxygenase.